The primary structure comprises 156 residues: Small ribosomal subunit protein uS7 (156 aa).

It belongs to the universal ribosomal protein uS7 family. Part of the 30S ribosomal subunit. Contacts proteins S9 and S11.

In terms of biological role, one of the primary rRNA binding proteins, it binds directly to 16S rRNA where it nucleates assembly of the head domain of the 30S subunit. Is located at the subunit interface close to the decoding center, probably blocks exit of the E-site tRNA. This is Small ribosomal subunit protein uS7 from Afipia carboxidovorans (strain ATCC 49405 / DSM 1227 / KCTC 32145 / OM5) (Oligotropha carboxidovorans).